Reading from the N-terminus, the 249-residue chain is Putative protein SNX29P2 (249 aa).

Disordered regions lie at residues Gln109–Trp171 and Asp188–Lys249. Low complexity predominate over residues Ser156–Ser170. A compositionally biased stretch (acidic residues) spans Asp193–Val204. Residues His226–Gln242 show a composition bias toward polar residues.

Belongs to the sorting nexin family.

The polypeptide is Putative protein SNX29P2 (SNX29P2) (Homo sapiens (Human)).